Here is a 367-residue protein sequence, read N- to C-terminus: 15-cis-zeta-carotene isomerase, chloroplastic (367 aa).

A chloroplast-targeting transit peptide spans 1-58 (MAVYHLLLSSPPSLLLLPPSPRRPNLTLIRRIPAHPRLGNSTSLLSSSSPVIRKILVR). 6 helical membrane-spanning segments follow: residues 95–115 (SWVY…VVWI), 137–157 (EVAM…LASL), 172–192 (VLFA…FINH), 211–231 (AIWV…FNLL), 269–289 (LWIG…HHLF), and 339–359 (LPYL…PLMQ).

Expressed in leaves and at lower levels in roots.

It localises to the plastid. Its subcellular location is the chloroplast membrane. The enzyme catalyses 9,9',15-tri-cis-zeta-carotene = 9,9'-di-cis-zeta-carotene. Functionally, isomerase involved in the biosynthesis of carotenoids. Catalyzes the cis- to trans-conversion of the 15-cis-bond in 9,15,9'-tri-cis-zeta-carotene. This chain is 15-cis-zeta-carotene isomerase, chloroplastic (Z-ISO), found in Arabidopsis thaliana (Mouse-ear cress).